Reading from the N-terminus, the 366-residue chain is MAEAPAGRALFEIYDEGFDSPSWGGVETALWHLSRSLREAGTEAEFYRSSEGADLDALAARVERDRVDAVFPLVESDLFEGAAWRRLPALHARTVRVWHDVSRLSADLSAPPPCPVHARVPALPGAPVAEGCPARGAHPEGPMREVFLGEWPWTRCFPRRSVIPWAADHVPAKDLCDPSGPVVLQLGKIDTVDAERCLRRLTGAGVALRVVFATWSRRGREARELVRAHQGAGRRVEVLDAYDIRTDWERVFGGASLFLLPSVFHETYNFAAAEAVQLGVPVAALGEGGNLPRFASLTAPTPDALVDRLLAGGGAVAPRPRPAAGWRDVAARYAEVIREHPAAGAGPAVPAGAGEGRGGREEEHGG.

Low complexity predominate over residues 342 to 352 (AAGAGPAVPAG). The disordered stretch occupies residues 342–366 (AAGAGPAVPAGAGEGRGGREEEHGG). Positions 357 to 366 (RGGREEEHGG) are enriched in basic and acidic residues.

It belongs to the glycosyltransferase group 1 family. Glycosyltransferase 4 subfamily. Requires a divalent metal cation as cofactor.

The enzyme catalyses ribostamycin + UDP-N-acetyl-alpha-D-glucosamine = 2'''-acetyl-6'''-hydroxyneomycin C + UDP + H(+). Its pathway is antibiotic biosynthesis; neomycin biosynthesis. Glycosyltransferase involved in the biosynthesis of neomycin by mediating glycosylation of ribostamycin with UDP-GlcNAc as a sugar donor to generate 2'''-acetyl-6'''-hydroxyneomycin C. This Streptomyces fradiae (Streptomyces roseoflavus) protein is UDP-GlcNAc:ribostamycin N-acetylglucosaminyltransferase (neoK).